Reading from the N-terminus, the 264-residue chain is Thymidylate synthase (264 aa).

Arg21 lines the dUMP pocket. His51 lines the (6R)-5,10-methylene-5,6,7,8-tetrahydrofolate pocket. 126-127 contributes to the dUMP binding site; that stretch reads RR. Residue Cys146 is the Nucleophile of the active site. Residues 166–169, Asn177, and 207–209 contribute to the dUMP site; these read RSCD and HLY. Residue Asp169 coordinates (6R)-5,10-methylene-5,6,7,8-tetrahydrofolate. Residue Ala263 participates in (6R)-5,10-methylene-5,6,7,8-tetrahydrofolate binding.

Belongs to the thymidylate synthase family. Bacterial-type ThyA subfamily. In terms of assembly, homodimer.

Its subcellular location is the cytoplasm. The enzyme catalyses dUMP + (6R)-5,10-methylene-5,6,7,8-tetrahydrofolate = 7,8-dihydrofolate + dTMP. It functions in the pathway pyrimidine metabolism; dTTP biosynthesis. Functionally, catalyzes the reductive methylation of 2'-deoxyuridine-5'-monophosphate (dUMP) to 2'-deoxythymidine-5'-monophosphate (dTMP) while utilizing 5,10-methylenetetrahydrofolate (mTHF) as the methyl donor and reductant in the reaction, yielding dihydrofolate (DHF) as a by-product. This enzymatic reaction provides an intracellular de novo source of dTMP, an essential precursor for DNA biosynthesis. This Shigella dysenteriae serotype 1 (strain Sd197) protein is Thymidylate synthase.